Here is a 334-residue protein sequence, read N- to C-terminus: Ferrochelatase (334 aa).

Fe cation-binding residues include histidine 207 and glutamate 288.

It belongs to the ferrochelatase family.

Its subcellular location is the cytoplasm. It catalyses the reaction heme b + 2 H(+) = protoporphyrin IX + Fe(2+). The protein operates within porphyrin-containing compound metabolism; protoheme biosynthesis; protoheme from protoporphyrin-IX: step 1/1. Catalyzes the ferrous insertion into protoporphyrin IX. This Helicobacter pylori (strain P12) protein is Ferrochelatase.